Here is a 271-residue protein sequence, read N- to C-terminus: GTP cyclohydrolase FolE2 (271 aa).

This sequence belongs to the GTP cyclohydrolase IV family.

It carries out the reaction GTP + H2O = 7,8-dihydroneopterin 3'-triphosphate + formate + H(+). It functions in the pathway cofactor biosynthesis; 7,8-dihydroneopterin triphosphate biosynthesis; 7,8-dihydroneopterin triphosphate from GTP: step 1/1. In terms of biological role, converts GTP to 7,8-dihydroneopterin triphosphate. This is GTP cyclohydrolase FolE2 from Geotalea uraniireducens (strain Rf4) (Geobacter uraniireducens).